The sequence spans 367 residues: Chorismate synthase (367 aa).

The NADP(+) site is built by R48 and R54. FMN is bound by residues 125-127, 238-239, G278, 293-297, and R319; these read RSS, NA, and KPTSS.

This sequence belongs to the chorismate synthase family. Homotetramer. FMNH2 is required as a cofactor.

It carries out the reaction 5-O-(1-carboxyvinyl)-3-phosphoshikimate = chorismate + phosphate. Its pathway is metabolic intermediate biosynthesis; chorismate biosynthesis; chorismate from D-erythrose 4-phosphate and phosphoenolpyruvate: step 7/7. Functionally, catalyzes the anti-1,4-elimination of the C-3 phosphate and the C-6 proR hydrogen from 5-enolpyruvylshikimate-3-phosphate (EPSP) to yield chorismate, which is the branch point compound that serves as the starting substrate for the three terminal pathways of aromatic amino acid biosynthesis. This reaction introduces a second double bond into the aromatic ring system. The chain is Chorismate synthase from Stenotrophomonas maltophilia (strain R551-3).